Here is a 298-residue protein sequence, read N- to C-terminus: Homoserine kinase (298 aa).

83 to 93 (PISRGLGSSSS) serves as a coordination point for ATP.

It belongs to the GHMP kinase family. Homoserine kinase subfamily.

It is found in the cytoplasm. It catalyses the reaction L-homoserine + ATP = O-phospho-L-homoserine + ADP + H(+). The protein operates within amino-acid biosynthesis; L-threonine biosynthesis; L-threonine from L-aspartate: step 4/5. Its function is as follows. Catalyzes the ATP-dependent phosphorylation of L-homoserine to L-homoserine phosphate. This Clostridium botulinum (strain Eklund 17B / Type B) protein is Homoserine kinase.